Here is a 984-residue protein sequence, read N- to C-terminus: Detocs histidine-protein kinase DtcA (984 aa).

A Phosphohistidine; by autocatalysis modification is found at histidine 645.

In terms of processing, autophosphorylated.

The catalysed reaction is ATP + protein L-histidine = ADP + protein N-phospho-L-histidine.. Sensor-kinase member of the two-component regulatory system Detocs that confers resistance to bacteriophage. When the system (DtcA-DtcB-DtcC) is expressed in a susceptible E.coli (strain MG1655) it confers resistance to bacteriophages T2, T4, T5, T6 and SECphi27. Detocs inhibits T5 infection leading to growth arrest but not complete cell lysis, during SECphi27 infection leads to cell lysis. DtcA (this subunit) probably autophosphorylates upon sensing viral infection, and subsequently transfers the phosphate signal to DtcC which activates it, leading to an antiviral defense; DtcB may scavenge phosphorylation signals from accidental activation of DtcA. The polypeptide is Detocs histidine-protein kinase DtcA (Vibrio alginolyticus).